The sequence spans 461 residues: Xyloglucan 6-xylosyltransferase 2 (461 aa).

Residues 1 to 20 (MIERCLGAYRCRRIQRALRQ) lie on the Cytoplasmic side of the membrane. The chain crosses the membrane as a helical; Signal-anchor for type II membrane protein span at residues 21–40 (LKVTILCLLLTVVVLRSTIG). At 41-461 (AGKFGTPEQD…KAVKVQTNQV (421 aa)) the chain is on the lumenal side. A disordered region spans residues 74-95 (QTGGDSSSGDGGGNSGGSNNYE). N-linked (GlcNAc...) asparagine glycosylation is present at Asn-432.

The protein belongs to the glycosyltransferase 34 family. As to quaternary structure, homodimer. Interacts with XXT1 and XXT5. Interacts with FUT1 and XLT2.

It is found in the golgi apparatus membrane. The enzyme catalyses Transfers an alpha-D-xylosyl residue from UDP-D-xylose to a glucose residue in xyloglucan, forming an alpha-(1-&gt;6)-D-xylosyl-D-glucose linkage.. Functionally, xylosyltransferase specific to UDP-D-xylose that accepts both cellopentaose and cellohexaose as substrates, with a better use of cellohexaose, to produce xyloglucan. Adds preferentially the first xylosyl residue to the fourth glucosyl residue from the reducing end of both acceptors. Transfer one xylose mainly to the second glucose residue from the non-reducing end. The acceptor should have a minimum of four glucose residues. Associates with other xyloglucan-synthesizing enzymes to form multiprotein complexes for xyloglucan synthesis in the Golgi. This chain is Xyloglucan 6-xylosyltransferase 2 (XXT2), found in Arabidopsis thaliana (Mouse-ear cress).